Consider the following 480-residue polypeptide: UDP-N-acetylmuramate--L-alanine ligase (480 aa).

Residue 122–128 (GTHGKTT) participates in ATP binding.

It belongs to the MurCDEF family.

It localises to the cytoplasm. It catalyses the reaction UDP-N-acetyl-alpha-D-muramate + L-alanine + ATP = UDP-N-acetyl-alpha-D-muramoyl-L-alanine + ADP + phosphate + H(+). It functions in the pathway cell wall biogenesis; peptidoglycan biosynthesis. Cell wall formation. This Pseudomonas aeruginosa (strain LESB58) protein is UDP-N-acetylmuramate--L-alanine ligase.